Consider the following 548-residue polypeptide: Methyl-accepting chemotaxis protein HlyB (548 aa).

Topologically, residues 1–10 (MIINKFSLKW) are cytoplasmic. The chain crosses the membrane as a helical span at residues 11–31 (MLAIAVAIPAIALLFVAFTSL). Residues 32-199 (NTMSVMQAQS…SFEAGRTKQM (168 aa)) lie on the Periplasmic side of the membrane. Residues 200 to 220 (VIIAAGLIISFITSLVIITNL) traverse the membrane as a helical segment. The region spanning 218-271 (TNLRSRVAYLKDRMSSAAANLSLRTRLELDGNDELCDIGKSFNAFIDKVHHSIE) is the HAMP domain. At 221–548 (RSRVAYLKDR…LDKLVGSFEL (328 aa)) the chain is on the cytoplasmic side. The region spanning 276–512 (NSKELATMAS…DINRNVEDIN (237 aa)) is the Methyl-accepting transducer domain.

It belongs to the methyl-accepting chemotaxis (MCP) protein family.

It localises to the cell inner membrane. In terms of biological role, chemotactic-signal transducers respond to changes in the concentration of attractants and repellents in the environment, transduce a signal from the outside to the inside of the cell, and facilitate sensory adaptation through the variation of the level of methylation. The protein is Methyl-accepting chemotaxis protein HlyB (hlyB) of Vibrio cholerae serotype O1 (strain ATCC 39315 / El Tor Inaba N16961).